Reading from the N-terminus, the 1270-residue chain is Myosin-binding protein C, cardiac-type (1270 aa).

Methionine 1 is subject to N-acetylmethionine. The tract at residues 1-24 (MPEPGKKPVSAFNKKPRSAEVTAG) is disordered. Serine 47 and serine 72 each carry phosphoserine. Positions 94 to 105 (VTEPAPPEKAES) are enriched in basic and acidic residues. The interval 94–152 (VTEPAPPEKAESEVAPGAPEEVPAPATELEESVSSPEGSVSVTQDGSAAEHQGAPDDPI) is disordered. Low complexity predominate over residues 106 to 135 (EVAPGAPEEVPAPATELEESVSSPEGSVSV). Residues 151–254 (PIGLFLMRPQ…FDSCNFNLTV (104 aa)) form the Ig-like C2-type 1 domain. Zn(2+) is bound by residues glutamine 206, histidine 208, glutamate 221, and histidine 223. A phosphoserine; by PKA and PKC mark is found at serine 273, serine 282, and serine 302. Phosphoserine is present on residues serine 307 and serine 423. Ig-like C2-type domains are found at residues 358–448 (STAF…VKEP), 449–539 (PVLI…VQEK), 540–629 (KLEV…HFME), and 641–767 (PKIH…VIDV). An intrachain disulfide couples cysteine 432 to cysteine 439. A phosphoserine mark is found at serine 455 and serine 546. Residue threonine 603 is modified to Phosphothreonine. Positions 683 to 702 (VTQGKKASAGPHPDAPEDAG) are disordered. Fibronectin type-III domains follow at residues 770 to 866 (APAA…IGPP) and 868 to 963 (EPTH…VQEI). An Ig-like C2-type 6 domain is found at 967-1061 (PRLQLPRHLR…ATLILQIVDK (95 aa)). A Fibronectin type-III 3 domain is found at 1064–1159 (PPQDIRIVET…TKEPVFIPRP (96 aa)). The region spanning 1177-1270 (PSFTQPLANR…ECRLEVRVPQ (94 aa)) is the Ig-like C2-type 7 domain. Arginine 1237 is subject to Omega-N-methylarginine.

It belongs to the immunoglobulin superfamily. MyBP family. Substrate for phosphorylation by PKA and PKC. Reversible phosphorylation appears to modulate contraction. Post-translationally, polyubiquitinated.

Functionally, thick filament-associated protein located in the crossbridge region of vertebrate striated muscle a bands. In vitro it binds MHC, F-actin and native thin filaments, and modifies the activity of actin-activated myosin ATPase. It may modulate muscle contraction or may play a more structural role. This is Myosin-binding protein C, cardiac-type (Mybpc3) from Mus musculus (Mouse).